Here is a 289-residue protein sequence, read N- to C-terminus: Elongation factor Ts (289 aa).

The involved in Mg(2+) ion dislocation from EF-Tu stretch occupies residues 82–85; that stretch reads TDFL.

This sequence belongs to the EF-Ts family.

It is found in the cytoplasm. Associates with the EF-Tu.GDP complex and induces the exchange of GDP to GTP. It remains bound to the aminoacyl-tRNA.EF-Tu.GTP complex up to the GTP hydrolysis stage on the ribosome. The sequence is that of Elongation factor Ts from Pseudomonas aeruginosa (strain LESB58).